Reading from the N-terminus, the 185-residue chain is Translation initiation factor IF-3, chloroplastic (185 aa).

This sequence belongs to the IF-3 family. Monomer.

It is found in the plastid. The protein localises to the chloroplast. Its function is as follows. IF-3 binds to the 30S ribosomal subunit and shifts the equilibrium between 70S ribosomes and their 50S and 30S subunits in favor of the free subunits, thus enhancing the availability of 30S subunits on which protein synthesis initiation begins. The protein is Translation initiation factor IF-3, chloroplastic of Cyanidium caldarium (Red alga).